Consider the following 232-residue polypeptide: Jasmonate ZIM domain-containing protein 1 (232 aa).

Positions 1–24 (MSSFPNTVAEGRRSGKAPEKSTFS) are disordered. Residues 10-19 (EGRRSGKAPE) are compositionally biased toward basic and acidic residues. One can recognise a Tify domain in the interval 96–131 (PGPESPQLTIFYAGKMLVFDAFPPEKATEVMEMATK). Composition is skewed to polar residues over residues 133–142 (ASNNSGTEES) and 158–167 (MPQTNTSSET). Residues 133–232 (ASNNSGTEES…QCSKQFDLNF (100 aa)) form a disordered region. Positions 182-189 (PRRASLLK) match the Nuclear localization signal motif. The Jas signature appears at 183–205 (RRASLLKFLEKRKERVNARGPYQ). Over residues 190 to 199 (FLEKRKERVN) the composition is skewed to basic and acidic residues.

The protein belongs to the TIFY/JAZ family. In terms of assembly, (Microbial infection) Interacts with the pathogenic Pseudomonas syringae HopZ1a protein; this interaction leads to its degradation. In terms of processing, ubiquitinated. Targeted for degradation by the SCF(COI1) E3 ubiquitin ligase-proteasome pathway during jasmonate signaling. (Microbial infection) Acetylated by Pseudomonas syringae HopZ1a. In terms of tissue distribution, mostly expressed in leaves and flowers and, to a lower extent, in grean pods and roots.

The protein localises to the nucleus. The protein resides in the cell membrane. Functionally, repressor of jasmonate responses. The polypeptide is Jasmonate ZIM domain-containing protein 1 (Glycine max (Soybean)).